The sequence spans 951 residues: Bifunctional glutamine synthetase adenylyltransferase/adenylyl-removing enzyme (951 aa).

Residues 1 to 440 (MLPLPSELQI…VFDDLIGDET (440 aa)) form an adenylyl removase region. The adenylyl transferase stretch occupies residues 449-951 (HGLYKSLWQD…WLAANDANVS (503 aa)).

This sequence belongs to the GlnE family. Mg(2+) serves as cofactor.

The catalysed reaction is [glutamine synthetase]-O(4)-(5'-adenylyl)-L-tyrosine + phosphate = [glutamine synthetase]-L-tyrosine + ADP. It carries out the reaction [glutamine synthetase]-L-tyrosine + ATP = [glutamine synthetase]-O(4)-(5'-adenylyl)-L-tyrosine + diphosphate. Its function is as follows. Involved in the regulation of glutamine synthetase GlnA, a key enzyme in the process to assimilate ammonia. When cellular nitrogen levels are high, the C-terminal adenylyl transferase (AT) inactivates GlnA by covalent transfer of an adenylyl group from ATP to specific tyrosine residue of GlnA, thus reducing its activity. Conversely, when nitrogen levels are low, the N-terminal adenylyl removase (AR) activates GlnA by removing the adenylyl group by phosphorolysis, increasing its activity. The regulatory region of GlnE binds the signal transduction protein PII (GlnB) which indicates the nitrogen status of the cell. The sequence is that of Bifunctional glutamine synthetase adenylyltransferase/adenylyl-removing enzyme from Yersinia pestis bv. Antiqua (strain Antiqua).